The sequence spans 58 residues: UPF0391 membrane protein GM21_0108 (58 aa).

2 helical membrane-spanning segments follow: residues 4–24 (WALI…GGIA) and 33–53 (VLFY…LLAG).

This sequence belongs to the UPF0391 family.

It localises to the cell membrane. This Geobacter sp. (strain M21) protein is UPF0391 membrane protein GM21_0108.